A 110-amino-acid chain; its full sequence is Insulin (110 aa).

A signal peptide spans 1 to 24 (MALWMRLLPLLALLALWGPDPAAA). Cystine bridges form between Cys31–Cys96, Cys43–Cys109, and Cys95–Cys100. Residues 57–87 (EAEDLQVGQVELGGGPGAGSLQPLALEGSLQ) constitute a propeptide, c peptide.

This sequence belongs to the insulin family. Heterodimer of a B chain and an A chain linked by two disulfide bonds.

It is found in the secreted. In terms of biological role, insulin decreases blood glucose concentration. It increases cell permeability to monosaccharides, amino acids and fatty acids. It accelerates glycolysis, the pentose phosphate cycle, and glycogen synthesis in liver. This chain is Insulin (INS), found in Gorilla gorilla gorilla (Western lowland gorilla).